A 944-amino-acid polypeptide reads, in one-letter code: E3 ubiquitin-protein ligase HACE1 (944 aa).

ANK repeat units lie at residues 23 to 55, 64 to 93, 97 to 126, 130 to 159, 163 to 192, 196 to 226, and 228 to 253; these read LPED…NSKF, VKRS…DPNY, SGCT…DVNI, EGLT…NVDV, MGQT…DINR, SGAT…YLPD, and NGVT…QHHP. The region spanning 609–944 is the HECT domain; the sequence is NCEKLKQGIA…HCGSYGYTMA (336 aa). Catalysis depends on C911, which acts as the Glycyl thioester intermediate.

The protein resides in the golgi apparatus. Its subcellular location is the golgi stack membrane. The protein localises to the cytoplasm. It localises to the endoplasmic reticulum. It catalyses the reaction S-ubiquitinyl-[E2 ubiquitin-conjugating enzyme]-L-cysteine + [acceptor protein]-L-lysine = [E2 ubiquitin-conjugating enzyme]-L-cysteine + N(6)-ubiquitinyl-[acceptor protein]-L-lysine.. Its pathway is protein modification; protein ubiquitination. E3 ubiquitin-protein ligase involved in Golgi membrane fusion and regulation of small GTPases. Acts as a regulator of Golgi membrane dynamics during the cell cycle: recruited to Golgi membrane by Rab proteins and regulates postmitotic Golgi membrane fusion. Acts by mediating ubiquitination during mitotic Golgi disassembly, ubiquitination serving as a signal for Golgi reassembly later, after cell division. The chain is E3 ubiquitin-protein ligase HACE1 (hace1) from Xenopus laevis (African clawed frog).